The chain runs to 593 residues: SPI-1 type 3 secretion system translocon protein SctE (593 aa).

2 coiled-coil regions span residues 151-208 and 287-314; these read DTAK…ATDA and EGRQ…NRIM. The next 2 helical transmembrane spans lie at 330–350 and 409–429; these read VVAA…GLAV and IVGA…VAVV.

The protein belongs to the SctE/SipB/YopB family. In terms of assembly, the core secretion machinery of the T3SS is composed of approximately 20 different proteins, including cytoplasmic components, a base, an export apparatus and a needle. This subunit is involved in the formation of a pore, called the translocon, in host membrane.

It localises to the secreted. Its subcellular location is the host membrane. Component of the type III secretion system 1 (SPI-1 T3SS), also called injectisome, which is used to inject bacterial effector proteins into eukaryotic host cells. SipB/SctE1 and SipC/SctB are inserted into the host membrane where they form a pore and allow the translocation of effector proteins into the cytosol of target cells. This is SPI-1 type 3 secretion system translocon protein SctE from Salmonella dublin.